A 377-amino-acid polypeptide reads, in one-letter code: uncharacterized protein (377 aa).

Residues 1-22 form the signal peptide; sequence MKFKYGTVVLGSFLGLSVVLAA. Cys23 carries N-palmitoyl cysteine lipidation. The S-diacylglycerol cysteine moiety is linked to residue Cys23. Residues 217 to 260 are disordered; it reads AKANGETNQKGRKAAKSNKTALVQLKNGADTTTNEENKDTKTSD. A compositionally biased stretch (basic and acidic residues) spans 251 to 260; it reads EENKDTKTSD.

This sequence belongs to the MG185/MG260 family.

It localises to the cell membrane. This is an uncharacterized protein from Mycoplasma pneumoniae (strain ATCC 29342 / M129 / Subtype 1) (Mycoplasmoides pneumoniae).